A 380-amino-acid polypeptide reads, in one-letter code: 4-hydroxy-3-methylbut-2-en-1-yl diphosphate synthase (flavodoxin) (380 aa).

4 residues coordinate [4Fe-4S] cluster: cysteine 279, cysteine 282, cysteine 314, and glutamate 321.

It belongs to the IspG family. [4Fe-4S] cluster is required as a cofactor.

It carries out the reaction (2E)-4-hydroxy-3-methylbut-2-enyl diphosphate + oxidized [flavodoxin] + H2O + 2 H(+) = 2-C-methyl-D-erythritol 2,4-cyclic diphosphate + reduced [flavodoxin]. The protein operates within isoprenoid biosynthesis; isopentenyl diphosphate biosynthesis via DXP pathway; isopentenyl diphosphate from 1-deoxy-D-xylulose 5-phosphate: step 5/6. Its function is as follows. Converts 2C-methyl-D-erythritol 2,4-cyclodiphosphate (ME-2,4cPP) into 1-hydroxy-2-methyl-2-(E)-butenyl 4-diphosphate. In Tropheryma whipplei (strain TW08/27) (Whipple's bacillus), this protein is 4-hydroxy-3-methylbut-2-en-1-yl diphosphate synthase (flavodoxin).